We begin with the raw amino-acid sequence, 87 residues long: Omega-lycotoxin-Am1d (87 aa).

The signal sequence occupies residues 1–17 (MKLSIFFVLFFIAIAYC). Positions 18-40 (QPEFLDDEEDEVEETLPVAEEGR) are excised as a propeptide. 4 cysteine pairs are disulfide-bonded: cysteine 44-cysteine 59, cysteine 51-cysteine 64, cysteine 58-cysteine 84, and cysteine 66-cysteine 82.

Belongs to the neurotoxin omega-lctx family. As to expression, expressed by the venom gland.

It localises to the secreted. In terms of biological role, modulates Cav2.1/CACNA1A voltage-gated calcium channels (P/Q-type currents) in rat cerebellar Purkinje cells and hippocampal CA1-CA3 neurons. At saturating concentrations (&gt;10 nM) decelerates activation kinetics and slightly increases peak amplitude without affecting deactivation kinetics. In vivo, does not cause death when intravenously injected into mice. In rat models, through its activity on Cav2.1/CACNA1A, has an ameliorative effect on memory defects provoked by hyperstimulation of N-methyl-D-aspartate receptors (NMDARs) in the hippocampus. This is Omega-lycotoxin-Am1d from Alopecosa marikovskyi (Wolf spider).